The chain runs to 636 residues: Putative lipase ATG15 (636 aa).

The Cytoplasmic segment spans residues 1–19; the sequence is MYKYGTVVDPAMTTNRRSR. A helical; Signal-anchor for type II membrane protein membrane pass occupies residues 20–42; that stretch reads LSGFRCASTARVTATLLLSFLAF. At 43 to 636 the chain is on the lumenal side; the sequence is SPSSASSDFG…DDLEFATDEM (594 aa). Asparagine 211, asparagine 233, asparagine 291, asparagine 315, and asparagine 477 each carry an N-linked (GlcNAc...) asparagine glycan. Residues 478–500 form a disordered region; that stretch reads GTETTTTSSPSTTSTTRTRTRTS. Positions 479 to 500 are enriched in low complexity; that stretch reads TETTTTSSPSTTSTTRTRTRTS.

The protein belongs to the AB hydrolase superfamily. Lipase family. As to quaternary structure, binds to both phosphatidylinositol (PI) and phosphatidylinositol 3,5-bisphosphate (PIP2).

Its subcellular location is the endosome. It localises to the multivesicular body membrane. The protein resides in the prevacuolar compartment membrane. It carries out the reaction a triacylglycerol + H2O = a diacylglycerol + a fatty acid + H(+). Functionally, lipase which is essential for lysis of subvacuolar cytoplasm to vacuole targeted bodies and intravacuolar autophagic bodies. Involved in the lysis of intravacuolar multivesicular body (MVB) vesicles. The intravacuolar membrane disintegration by ATG15 is critical to life span extension. Autophagy is required for proper vegetative growth, asexual/sexual reproduction, and full virulence. Autophagy is particularly involved in the biosynthesis of deoxynivalenol (DON), an important virulence determinant. This is Putative lipase ATG15 from Gibberella zeae (strain ATCC MYA-4620 / CBS 123657 / FGSC 9075 / NRRL 31084 / PH-1) (Wheat head blight fungus).